The chain runs to 117 residues: Large ribosomal subunit protein bL20 (117 aa).

The protein belongs to the bacterial ribosomal protein bL20 family.

Its function is as follows. Binds directly to 23S ribosomal RNA and is necessary for the in vitro assembly process of the 50S ribosomal subunit. It is not involved in the protein synthesizing functions of that subunit. The sequence is that of Large ribosomal subunit protein bL20 from Magnetococcus marinus (strain ATCC BAA-1437 / JCM 17883 / MC-1).